The chain runs to 188 residues: Protein GrpE (188 aa).

The segment at 1 to 22 (MADEQTLDTQNLDANQAPEASG) is disordered.

Belongs to the GrpE family. Homodimer.

It localises to the cytoplasm. Its function is as follows. Participates actively in the response to hyperosmotic and heat shock by preventing the aggregation of stress-denatured proteins, in association with DnaK and GrpE. It is the nucleotide exchange factor for DnaK and may function as a thermosensor. Unfolded proteins bind initially to DnaJ; upon interaction with the DnaJ-bound protein, DnaK hydrolyzes its bound ATP, resulting in the formation of a stable complex. GrpE releases ADP from DnaK; ATP binding to DnaK triggers the release of the substrate protein, thus completing the reaction cycle. Several rounds of ATP-dependent interactions between DnaJ, DnaK and GrpE are required for fully efficient folding. The sequence is that of Protein GrpE from Pseudomonas fluorescens (strain ATCC BAA-477 / NRRL B-23932 / Pf-5).